The chain runs to 313 residues: HPr kinase/phosphorylase (313 aa).

Residues histidine 136 and lysine 157 contribute to the active site. 151–158 (GDSGIGKS) is a binding site for ATP. Serine 158 lines the Mg(2+) pocket. Aspartate 175 serves as the catalytic Proton acceptor; for phosphorylation activity. Proton donor; for dephosphorylation activity. The segment at 199–208 (LEIRGLGIIN) is important for the catalytic mechanism of both phosphorylation and dephosphorylation. Glutamate 200 contacts Mg(2+). Residue arginine 241 is part of the active site. The tract at residues 262–267 (PVRPGR) is important for the catalytic mechanism of dephosphorylation.

This sequence belongs to the HPrK/P family. As to quaternary structure, homohexamer. The cofactor is Mg(2+).

The enzyme catalyses [HPr protein]-L-serine + ATP = [HPr protein]-O-phospho-L-serine + ADP + H(+). The catalysed reaction is [HPr protein]-O-phospho-L-serine + phosphate + H(+) = [HPr protein]-L-serine + diphosphate. Catalyzes the ATP- as well as the pyrophosphate-dependent phosphorylation of a specific serine residue in HPr, a phosphocarrier protein of the phosphoenolpyruvate-dependent sugar phosphotransferase system (PTS). HprK/P also catalyzes the pyrophosphate-producing, inorganic phosphate-dependent dephosphorylation (phosphorolysis) of seryl-phosphorylated HPr (P-Ser-HPr). The two antagonistic activities of HprK/P are regulated by several intracellular metabolites, which change their concentration in response to the absence or presence of rapidly metabolisable carbon sources (glucose, fructose, etc.) in the growth medium. Therefore, by controlling the phosphorylation state of HPr, HPrK/P is a sensor enzyme that plays a major role in the regulation of carbon metabolism and sugar transport: it mediates carbon catabolite repression (CCR), and regulates PTS-catalyzed carbohydrate uptake and inducer exclusion. The sequence is that of HPr kinase/phosphorylase from Staphylococcus saprophyticus subsp. saprophyticus (strain ATCC 15305 / DSM 20229 / NCIMB 8711 / NCTC 7292 / S-41).